A 422-amino-acid chain; its full sequence is MESAVSTSTQVPDEFDRNVPRICGVCGDKATGFHFNAMTCEGCKGFFRRSMKRKASFTCPFNGSCTITKDNRRHCQACRLKRCLDIGMMKEFILTDEEVQRKKELIQRRKDEEAHREAQKPRLSDEQRNIIDTLVDAHHKTYDDSYSDFSRFRPPVREGPVTRSASRAASLHSLSDASSDSFSHSPESGDRKMNLSNLLMMYQEQGLSSSPDSKEEDGSSLSMLPHLADLVSYSIQKVIGFAKMIPGFRELTAEDQIALLKSSAIEVIMLRSNQSFSLEDMSWSCGGPEFKYCVNDVTKAGHTLELLEPLVKFQVGLKKLNLHEEEHVLLMAICLLSPDRPGVQDHVRVEALQDKVSEVLQAYIRAHHPGGRLLYAKMIQKLADLRSLNEEHSKQYRSLSFQPEHSMQLTPLVLEVFGGQVT.

The segment at residues 20–95 (PRICGVCGDK…IGMMKEFILT (76 aa)) is a DNA-binding region (nuclear receptor). 8 residues coordinate Zn(2+): C23, C26, C40, C43, C59, C65, C75, and C78. 2 NR C4-type zinc fingers span residues 23 to 43 (CGVCGDKATGFHFNAMTCEGC) and 59 to 78 (CPFNGSCTITKDNRRHCQAC). Residues 96-125 (DEEVQRKKELIQRRKDEEAHREAQKPRLSD) form a hinge region. Positions 106 to 128 (IQRRKDEEAHREAQKPRLSDEQR) are disordered. In terms of domain architecture, NR LBD spans 126 to 418 (EQRNIIDTLV…LTPLVLEVFG (293 aa)). Calcitriol is bound at residue Y142. Positions 145–190 (SYSDFSRFRPPVREGPVTRSASRAASLHSLSDASSDSFSHSPESGD) are disordered. Low complexity predominate over residues 163-185 (RSASRAASLHSLSDASSDSFSHS). Residue S234 participates in calcitriol binding. The tract at residues 243–261 (KMIPGFRELTAEDQIALLK) is interaction with coactivator LXXLL motif. Calcitriol contacts are provided by R271, S275, H302, and H392. Positions 411 to 419 (PLVLEVFGG) match the 9aaTAD motif.

The protein belongs to the nuclear hormone receptor family. In terms of assembly, homodimer in the absence of bound vitamin D3. Heterodimer with RXRA after vitamin D3 binding. Interacts with ncoa1 and possibly other coactivators, leading to a strong increase of transcription of target genes. Detected in embryo 24 to 48 hours after fertilization, and in intestinal bulb.

It localises to the nucleus. Its subcellular location is the cytoplasm. Its function is as follows. Nuclear receptor for calcitriol, the active form of vitamin D3 which mediates the action of this vitamin on cells. Enters the nucleus upon vitamin D3 binding where it forms heterodimers with the retinoid X receptor/RXR. The VDR-RXR heterodimers bind to specific response elements on DNA and activate the transcription of vitamin D3-responsive target genes. Recruited to promoters via its interaction with BAZ1B/WSTF which mediates the interaction with acetylated histones, an essential step for VDR-promoter association. Plays a central role in calcium homeostasis. This Danio rerio (Zebrafish) protein is Vitamin D3 receptor B (vdrb).